Here is a 100-residue protein sequence, read N- to C-terminus: Large ribosomal subunit protein uL23 (100 aa).

This sequence belongs to the universal ribosomal protein uL23 family. In terms of assembly, part of the 50S ribosomal subunit. Contacts protein L29, and trigger factor when it is bound to the ribosome.

In terms of biological role, one of the early assembly proteins it binds 23S rRNA. One of the proteins that surrounds the polypeptide exit tunnel on the outside of the ribosome. Forms the main docking site for trigger factor binding to the ribosome. This Buchnera aphidicola subsp. Baizongia pistaciae (strain Bp) protein is Large ribosomal subunit protein uL23.